Consider the following 293-residue polypeptide: Triacylglycerol lipase (293 aa).

The AB hydrolase-1 domain occupies 10–206; that stretch reads PILLVHGLFG…YYSWSGIIKG (197 aa). Leu-17 is a binding site for substrate. Ser-83 functions as the Nucleophile in the catalytic mechanism. Gln-84 is a substrate binding site. Asp-217 serves as a coordination point for Ca(2+). Residues Asp-238 and His-260 each act as charge relay system in the active site. Ca(2+) contacts are provided by Asp-262, His-266, and Arg-269.

This sequence belongs to the AB hydrolase superfamily. Pseudomonas lipase family. Requires Ca(2+) as cofactor.

It localises to the secreted. It carries out the reaction a triacylglycerol + H2O = a diacylglycerol + a fatty acid + H(+). Functionally, catalyzes the hydrolysis of triacylglycerols, with the highest activity with tributyrin (C4), lower activity with tricaprylin (C8), and much lower activity with triacetin (C2), trilaurin (C12) and triolein (C18). This Pseudomonas fragi protein is Triacylglycerol lipase (lips).